The following is a 150-amino-acid chain: MRAVIQRVSSASVAVDGQITGAIARGLLVLLGVAHDDTPADVEWLAGKICALRIFEDDEGRMNRSVVETAGGVLVVSQFTLLASTRKGTRPSFNDAARPELAEPLYAAFLQQVSGRLGRPAASGVFGAMMTVSLVNDGPVTLVIDSHARE.

A Gly-cisPro motif, important for rejection of L-amino acids motif is present at residues 138–139; the sequence is GP.

The protein belongs to the DTD family. In terms of assembly, homodimer.

It is found in the cytoplasm. It carries out the reaction glycyl-tRNA(Ala) + H2O = tRNA(Ala) + glycine + H(+). The enzyme catalyses a D-aminoacyl-tRNA + H2O = a tRNA + a D-alpha-amino acid + H(+). Its function is as follows. An aminoacyl-tRNA editing enzyme that deacylates mischarged D-aminoacyl-tRNAs. Also deacylates mischarged glycyl-tRNA(Ala), protecting cells against glycine mischarging by AlaRS. Acts via tRNA-based rather than protein-based catalysis; rejects L-amino acids rather than detecting D-amino acids in the active site. By recycling D-aminoacyl-tRNA to D-amino acids and free tRNA molecules, this enzyme counteracts the toxicity associated with the formation of D-aminoacyl-tRNA entities in vivo and helps enforce protein L-homochirality. In Opitutus terrae (strain DSM 11246 / JCM 15787 / PB90-1), this protein is D-aminoacyl-tRNA deacylase.